A 282-amino-acid polypeptide reads, in one-letter code: Bifunctional protein FolD (282 aa).

Residues 166–168 (GAS) and Ile-232 contribute to the NADP(+) site.

Belongs to the tetrahydrofolate dehydrogenase/cyclohydrolase family. Homodimer.

It carries out the reaction (6R)-5,10-methylene-5,6,7,8-tetrahydrofolate + NADP(+) = (6R)-5,10-methenyltetrahydrofolate + NADPH. The catalysed reaction is (6R)-5,10-methenyltetrahydrofolate + H2O = (6R)-10-formyltetrahydrofolate + H(+). It functions in the pathway one-carbon metabolism; tetrahydrofolate interconversion. Catalyzes the oxidation of 5,10-methylenetetrahydrofolate to 5,10-methenyltetrahydrofolate and then the hydrolysis of 5,10-methenyltetrahydrofolate to 10-formyltetrahydrofolate. The chain is Bifunctional protein FolD from Histophilus somni (strain 129Pt) (Haemophilus somnus).